Consider the following 188-residue polypeptide: CXXC-type zinc finger protein 4 (188 aa).

Residues 1–20 (MHRNDSQRLGKPGGAPESLQ) are disordered. The segment at 122-163 (AKKKRKRCGVCVPCKRLINCGVCSSCRNRKTGHQICKFRKCE) adopts a CXXC-type zinc-finger fold. Residues cysteine 129, cysteine 132, cysteine 135, cysteine 141, cysteine 144, cysteine 147, cysteine 157, and cysteine 162 each coordinate Zn(2+).

It is found in the cytoplasm. Acts as a negative regulator of the Wnt signaling pathway required for anterior neural structure formation. Binds preferentially to DNA containing cytidine-phosphate-guanosine (CpG) dinucleotides over CpH (H=A, T, and C), hemimethylated-CpG and hemimethylated-hydroxymethyl-CpG. This Xenopus tropicalis (Western clawed frog) protein is CXXC-type zinc finger protein 4 (cxxc4).